Reading from the N-terminus, the 208-residue chain is NAD(P)H-hydrate epimerase (208 aa).

The 199-residue stretch at 10–208 folds into the YjeF N-terminal domain; that stretch reads IRDAERQTLA…TLGVIMTPAN (199 aa). 54 to 58 contacts (6S)-NADPHX; the sequence is NNGGD. Residues asparagine 55 and aspartate 117 each contribute to the K(+) site. Residues 121-127 and aspartate 150 each bind (6S)-NADPHX; that span reads GIGLNRP. Serine 153 provides a ligand contact to K(+).

The protein belongs to the NnrE/AIBP family. Requires K(+) as cofactor.

It catalyses the reaction (6R)-NADHX = (6S)-NADHX. The enzyme catalyses (6R)-NADPHX = (6S)-NADPHX. Its function is as follows. Catalyzes the epimerization of the S- and R-forms of NAD(P)HX, a damaged form of NAD(P)H that is a result of enzymatic or heat-dependent hydration. This is a prerequisite for the S-specific NAD(P)H-hydrate dehydratase to allow the repair of both epimers of NAD(P)HX. This Achromobacter xylosoxidans (strain A8) protein is NAD(P)H-hydrate epimerase.